Here is a 171-residue protein sequence, read N- to C-terminus: Peptide deformylase 1 (171 aa).

Cys-99 and His-141 together coordinate Fe cation. The active site involves Glu-142.

This sequence belongs to the polypeptide deformylase family. Fe(2+) is required as a cofactor.

The catalysed reaction is N-terminal N-formyl-L-methionyl-[peptide] + H2O = N-terminal L-methionyl-[peptide] + formate. In terms of biological role, removes the formyl group from the N-terminal Met of newly synthesized proteins. Requires at least a dipeptide for an efficient rate of reaction. N-terminal L-methionine is a prerequisite for activity but the enzyme has broad specificity at other positions. This is Peptide deformylase 1 from Xanthomonas axonopodis pv. citri (strain 306).